We begin with the raw amino-acid sequence, 1417 residues long: DExH-box ATP-dependent RNA helicase DExH4, chloroplastic (1417 aa).

Positions 1–12 (MAPTKKPQKNKQ) are enriched in basic residues. The interval 1-37 (MAPTKKPQKNKQSKNEIASSLIPNSGHKKPSKAPKLL) is disordered. The N-terminal 61 residues, 1–61 (MAPTKKPQKN…NFRRTPSPVT (61 aa)), are a transit peptide targeting the chloroplast. The Helicase ATP-binding domain maps to 607 to 781 (LQKLKEKDVL…FGQCPIITAQ (175 aa)). Residue 620–627 (GETGSGKT) coordinates ATP. Residues 722–725 (DEVH) carry the DEIH box motif. One can recognise a Helicase C-terminal domain in the interval 868–1043 (LLEELICHID…ELCLHIKLLG (176 aa)).

Belongs to the DExH box helicase family.

The protein resides in the plastid. The protein localises to the chloroplast. The enzyme catalyses ATP + H2O = ADP + phosphate + H(+). This chain is DExH-box ATP-dependent RNA helicase DExH4, chloroplastic, found in Arabidopsis thaliana (Mouse-ear cress).